Reading from the N-terminus, the 238-residue chain is Large ribosomal subunit protein bL17m (238 aa).

Belongs to the bacterial ribosomal protein bL17 family. As to quaternary structure, component of the mitochondrial large ribosomal subunit (mt-LSU). Mature yeast 74S mitochondrial ribosomes consist of a small (37S) and a large (54S) subunit. The 37S small subunit contains a 15S ribosomal RNA (15S mt-rRNA) and 34 different proteins. The 54S large subunit contains a 21S rRNA (21S mt-rRNA) and 46 different proteins.

The protein localises to the mitochondrion. Functionally, component of the mitochondrial ribosome (mitoribosome), a dedicated translation machinery responsible for the synthesis of mitochondrial genome-encoded proteins, including at least some of the essential transmembrane subunits of the mitochondrial respiratory chain. The mitoribosomes are attached to the mitochondrial inner membrane and translation products are cotranslationally integrated into the membrane. The sequence is that of Large ribosomal subunit protein bL17m (MRPL8) from Saccharomyces cerevisiae (strain ATCC 204508 / S288c) (Baker's yeast).